A 344-amino-acid chain; its full sequence is Phosphate acyltransferase (344 aa).

This sequence belongs to the PlsX family. In terms of assembly, homodimer. Probably interacts with PlsY.

It is found in the cytoplasm. The catalysed reaction is a fatty acyl-[ACP] + phosphate = an acyl phosphate + holo-[ACP]. Its pathway is lipid metabolism; phospholipid metabolism. Catalyzes the reversible formation of acyl-phosphate (acyl-PO(4)) from acyl-[acyl-carrier-protein] (acyl-ACP). This enzyme utilizes acyl-ACP as fatty acyl donor, but not acyl-CoA. This chain is Phosphate acyltransferase, found in Blochmanniella floridana.